Consider the following 292-residue polypeptide: Phosphatidylglycerol--prolipoprotein diacylglyceryl transferase (292 aa).

4 consecutive transmembrane segments (helical) span residues 7-27, 45-65, 83-103, and 116-136; these read IILS…FLRE, FQLR…YVLA, LFWG…IFNW, and IWHG…MIFI. Arginine 165 lines the a 1,2-diacyl-sn-glycero-3-phospho-(1'-sn-glycerol) pocket. Helical transmembrane passes span 204–224 and 264–284; these read PTFL…YFFV and AAQV…AYII.

This sequence belongs to the Lgt family.

The protein localises to the cell inner membrane. It carries out the reaction L-cysteinyl-[prolipoprotein] + a 1,2-diacyl-sn-glycero-3-phospho-(1'-sn-glycerol) = an S-1,2-diacyl-sn-glyceryl-L-cysteinyl-[prolipoprotein] + sn-glycerol 1-phosphate + H(+). Its pathway is protein modification; lipoprotein biosynthesis (diacylglyceryl transfer). Its function is as follows. Catalyzes the transfer of the diacylglyceryl group from phosphatidylglycerol to the sulfhydryl group of the N-terminal cysteine of a prolipoprotein, the first step in the formation of mature lipoproteins. This Fervidobacterium nodosum (strain ATCC 35602 / DSM 5306 / Rt17-B1) protein is Phosphatidylglycerol--prolipoprotein diacylglyceryl transferase.